The sequence spans 607 residues: Thymidine kinase (607 aa).

Disordered stretches follow at residues 1 to 160 (MAGF…ADST) and 180 to 215 (DDKSDCESEDESNFRRPSSHSALKQKNGGKGKPSGL). A compositionally biased stretch (basic and acidic residues) spans 17–32 (KCQEDESPENERHENF). 3 stretches are compositionally biased toward polar residues: residues 88–106 (AAVTSNTGNSPGSRHTSCP), 148–160 (RKTSCTEGGADST), and 194–203 (RRPSSHSALK). ATP is bound at residue 291–298 (GAPGVGKT). E317 functions as the Proton acceptor in the catalytic mechanism. Q355 is a binding site for substrate. ATP is bound at residue R445. R451 is a substrate binding site.

This sequence belongs to the herpesviridae thymidine kinase family. As to quaternary structure, homodimer.

The protein localises to the virion tegument. It is found in the host nucleus. The enzyme catalyses thymidine + ATP = dTMP + ADP + H(+). Functionally, catalyzes the transfer of the gamma-phospho group of ATP to thymidine to generate dTMP in the salvage pathway of pyrimidine synthesis. The dTMP serves as a substrate for DNA polymerase during viral DNA replication. Allows the virus to be reactivated and to grow in non-proliferative cells lacking a high concentration of phosphorylated nucleic acid precursors. The protein is Thymidine kinase of Epstein-Barr virus (strain GD1) (HHV-4).